Reading from the N-terminus, the 79-residue chain is Small ribosomal subunit protein bS18 (79 aa).

It belongs to the bacterial ribosomal protein bS18 family. In terms of assembly, part of the 30S ribosomal subunit. Forms a tight heterodimer with protein bS6.

Functionally, binds as a heterodimer with protein bS6 to the central domain of the 16S rRNA, where it helps stabilize the platform of the 30S subunit. The polypeptide is Small ribosomal subunit protein bS18 (Micrococcus luteus (strain ATCC 4698 / DSM 20030 / JCM 1464 / CCM 169 / CCUG 5858 / IAM 1056 / NBRC 3333 / NCIMB 9278 / NCTC 2665 / VKM Ac-2230) (Micrococcus lysodeikticus)).